Reading from the N-terminus, the 149-residue chain is D-aminoacyl-tRNA deacylase (149 aa).

Positions 137 to 138 (GP) match the Gly-cisPro motif, important for rejection of L-amino acids motif.

This sequence belongs to the DTD family. As to quaternary structure, homodimer.

It is found in the cytoplasm. It carries out the reaction glycyl-tRNA(Ala) + H2O = tRNA(Ala) + glycine + H(+). The enzyme catalyses a D-aminoacyl-tRNA + H2O = a tRNA + a D-alpha-amino acid + H(+). In terms of biological role, an aminoacyl-tRNA editing enzyme that deacylates mischarged D-aminoacyl-tRNAs. Also deacylates mischarged glycyl-tRNA(Ala), protecting cells against glycine mischarging by AlaRS. Acts via tRNA-based rather than protein-based catalysis; rejects L-amino acids rather than detecting D-amino acids in the active site. By recycling D-aminoacyl-tRNA to D-amino acids and free tRNA molecules, this enzyme counteracts the toxicity associated with the formation of D-aminoacyl-tRNA entities in vivo and helps enforce protein L-homochirality. The chain is D-aminoacyl-tRNA deacylase from Desulforamulus reducens (strain ATCC BAA-1160 / DSM 100696 / MI-1) (Desulfotomaculum reducens).